A 215-amino-acid chain; its full sequence is 3-demethoxyubiquinol 3-hydroxylase (215 aa).

Fe cation contacts are provided by Glu64, Glu94, His97, Glu146, Glu178, and His181.

Belongs to the COQ7 family. Fe cation serves as cofactor.

Its subcellular location is the cell membrane. It catalyses the reaction a 5-methoxy-2-methyl-3-(all-trans-polyprenyl)benzene-1,4-diol + AH2 + O2 = a 3-demethylubiquinol + A + H2O. The protein operates within cofactor biosynthesis; ubiquinone biosynthesis. In terms of biological role, catalyzes the hydroxylation of 2-nonaprenyl-3-methyl-6-methoxy-1,4-benzoquinol during ubiquinone biosynthesis. This Pseudomonas fluorescens (strain SBW25) protein is 3-demethoxyubiquinol 3-hydroxylase.